Consider the following 63-residue polypeptide: Small ribosomal subunit protein eS17 (63 aa).

Belongs to the eukaryotic ribosomal protein eS17 family.

The polypeptide is Small ribosomal subunit protein eS17 (Methanococcus maripaludis (strain DSM 14266 / JCM 13030 / NBRC 101832 / S2 / LL)).